The chain runs to 432 residues: Adenylosuccinate synthetase (432 aa).

GTP is bound by residues 13–19 (GDEGKGK) and 41–43 (GHT). The active-site Proton acceptor is the Asp14. Residues Asp14 and Gly41 each contribute to the Mg(2+) site. Residues 14–17 (DEGK), 39–42 (NAGH), Thr130, Arg144, Gln225, Thr240, and Arg304 contribute to the IMP site. His42 functions as the Proton donor in the catalytic mechanism. Residue 300 to 306 (ATTGRKR) coordinates substrate. GTP contacts are provided by residues Arg306, 332–334 (KLD), and 415–417 (STG).

Belongs to the adenylosuccinate synthetase family. As to quaternary structure, homodimer. Requires Mg(2+) as cofactor.

The protein localises to the cytoplasm. The enzyme catalyses IMP + L-aspartate + GTP = N(6)-(1,2-dicarboxyethyl)-AMP + GDP + phosphate + 2 H(+). Its pathway is purine metabolism; AMP biosynthesis via de novo pathway; AMP from IMP: step 1/2. In terms of biological role, plays an important role in the de novo pathway of purine nucleotide biosynthesis. Catalyzes the first committed step in the biosynthesis of AMP from IMP. The polypeptide is Adenylosuccinate synthetase (Vibrio cholerae serotype O1 (strain ATCC 39541 / Classical Ogawa 395 / O395)).